A 155-amino-acid chain; its full sequence is Putative pre-16S rRNA nuclease (155 aa).

This sequence belongs to the YqgF nuclease family.

The protein localises to the cytoplasm. Could be a nuclease involved in processing of the 5'-end of pre-16S rRNA. The polypeptide is Putative pre-16S rRNA nuclease (Xanthomonas euvesicatoria pv. vesicatoria (strain 85-10) (Xanthomonas campestris pv. vesicatoria)).